A 566-amino-acid polypeptide reads, in one-letter code: Putative ABC transporter ATP-binding protein BT9727_2424 (566 aa).

2 consecutive ABC transporter domains span residues 5-246 and 300-533; these read ISFE…GLRE and LKVE…ANLK. ATP-binding positions include 39–46 and 333–340; these read GRSGSGKS and GHNGAGKS.

The protein belongs to the ABC transporter superfamily.

Its subcellular location is the cell membrane. In terms of biological role, probably part of an ABC transporter complex. Responsible for energy coupling to the transport system. The polypeptide is Putative ABC transporter ATP-binding protein BT9727_2424 (Bacillus thuringiensis subsp. konkukian (strain 97-27)).